A 42-amino-acid chain; its full sequence is Photosystem II reaction center protein J (42 aa).

Residues 10-30 form a helical membrane-spanning segment; that stretch reads IPLWLVGTVVGLLAIGLLALF.

This sequence belongs to the PsbJ family. As to quaternary structure, PSII is composed of 1 copy each of membrane proteins PsbA, PsbB, PsbC, PsbD, PsbE, PsbF, PsbH, PsbI, PsbJ, PsbK, PsbL, PsbM, PsbT, PsbX, PsbY, PsbZ, Psb30/Ycf12, at least 3 peripheral proteins of the oxygen-evolving complex and a large number of cofactors. It forms dimeric complexes.

The protein localises to the plastid. Its subcellular location is the chloroplast thylakoid membrane. In terms of biological role, one of the components of the core complex of photosystem II (PSII). PSII is a light-driven water:plastoquinone oxidoreductase that uses light energy to abstract electrons from H(2)O, generating O(2) and a proton gradient subsequently used for ATP formation. It consists of a core antenna complex that captures photons, and an electron transfer chain that converts photonic excitation into a charge separation. The chain is Photosystem II reaction center protein J from Mesostigma viride (Green alga).